The sequence spans 509 residues: Probable cytosol aminopeptidase (509 aa).

Residues K277 and D282 each coordinate Mn(2+). The active site involves K289. D300, D359, and E361 together coordinate Mn(2+). The active site involves R363.

It belongs to the peptidase M17 family. It depends on Mn(2+) as a cofactor.

It localises to the cytoplasm. The catalysed reaction is Release of an N-terminal amino acid, Xaa-|-Yaa-, in which Xaa is preferably Leu, but may be other amino acids including Pro although not Arg or Lys, and Yaa may be Pro. Amino acid amides and methyl esters are also readily hydrolyzed, but rates on arylamides are exceedingly low.. It carries out the reaction Release of an N-terminal amino acid, preferentially leucine, but not glutamic or aspartic acids.. Presumably involved in the processing and regular turnover of intracellular proteins. Catalyzes the removal of unsubstituted N-terminal amino acids from various peptides. The sequence is that of Probable cytosol aminopeptidase from Chloroherpeton thalassium (strain ATCC 35110 / GB-78).